Here is a 377-residue protein sequence, read N- to C-terminus: Succinyl-diaminopimelate desuccinylase (377 aa).

Residue His67 coordinates Zn(2+). Asp69 is a catalytic residue. A Zn(2+)-binding site is contributed by Asp100. Residue Glu134 is the Proton acceptor of the active site. Positions 135, 163, and 349 each coordinate Zn(2+).

Belongs to the peptidase M20A family. DapE subfamily. As to quaternary structure, homodimer. Zn(2+) is required as a cofactor. The cofactor is Co(2+).

It catalyses the reaction N-succinyl-(2S,6S)-2,6-diaminopimelate + H2O = (2S,6S)-2,6-diaminopimelate + succinate. Its pathway is amino-acid biosynthesis; L-lysine biosynthesis via DAP pathway; LL-2,6-diaminopimelate from (S)-tetrahydrodipicolinate (succinylase route): step 3/3. Its function is as follows. Catalyzes the hydrolysis of N-succinyl-L,L-diaminopimelic acid (SDAP), forming succinate and LL-2,6-diaminopimelate (DAP), an intermediate involved in the bacterial biosynthesis of lysine and meso-diaminopimelic acid, an essential component of bacterial cell walls. This Haemophilus influenzae (strain 86-028NP) protein is Succinyl-diaminopimelate desuccinylase.